The following is a 344-amino-acid chain: NDP-polyphosphate phosphotransferase 2 (344 aa).

Positions 1–60 (METAKPIAPQKDSKANGVDATDPVVKVASPQDPAGDAKVEDATAPVAEVEPRTPRNRRLP) are disordered.

Belongs to the polyphosphate kinase 2 (PPK2) family. Class I subfamily. It depends on Mg(2+) as a cofactor.

The catalysed reaction is [phosphate](n) + ATP = [phosphate](n+1) + ADP. It catalyses the reaction [phosphate](n) + CTP = [phosphate](n+1) + CDP. The enzyme catalyses [phosphate](n) + GTP = [phosphate](n+1) + GDP. It carries out the reaction [phosphate](n) + UTP = [phosphate](n+1) + UDP. Its function is as follows. Uses inorganic polyphosphate (polyP) as a donor to convert NDP to NTP. PolyP hydrolysis is slightly faster with ADP, but it can also use GDP, CDP and UDP. The chain is NDP-polyphosphate phosphotransferase 2 from Ruegeria pomeroyi (strain ATCC 700808 / DSM 15171 / DSS-3) (Silicibacter pomeroyi).